The chain runs to 355 residues: Olfactory receptor 1I1 (355 aa).

At 1-25 (MEPEKQTEISEFFLQGLSEKPEHQT) the chain is on the extracellular side. Residues 26–49 (LLFTMFLSTYLVTIIGNALIILAI) form a helical membrane-spanning segment. The Cytoplasmic portion of the chain corresponds to 50-57 (ITDSHLHT). A helical membrane pass occupies residues 58–79 (PMYFFLFNLSLVDTLLSSTTVP). The Extracellular portion of the chain corresponds to 80-100 (KMLANIQAQSRAIPFVGCLTQ). Residues 101 to 120 (MYAFHLFGTMDSFLLAVMAI) form a helical membrane-spanning segment. At 121–139 (DRFVAIVHPQRYLVLMCSP) the chain is on the cytoplasmic side. A helical transmembrane segment spans residues 140 to 158 (VCGLLLGASWMITNLQSLI). At 159–195 (HTCLMAQLTFCAGSEISHFFCDLMPLLKLSGSDTHTN) the chain is on the extracellular side. The chain crosses the membrane as a helical span at residues 196–219 (ELVIFAFGIVVGTSPFSCILLSYI). Residues 220–236 (RIFWTVFKIPSTRGKWK) are Cytoplasmic-facing. A helical transmembrane segment spans residues 237–259 (AFSTCGLHLTVVSLSYGTIFAVY). Residues 260-272 (LQPTSPSSSQKDK) are Extracellular-facing. Residues 273–292 (AAALMCGVFIPMLNPFIYSI) form a helical membrane-spanning segment. The Cytoplasmic segment spans residues 293–355 (RNKDMKAALG…QSLAGNRDME (63 aa)).

It belongs to the G-protein coupled receptor 1 family.

The protein localises to the cell membrane. Functionally, odorant receptor. The polypeptide is Olfactory receptor 1I1 (OR1I1) (Homo sapiens (Human)).